Here is a 924-residue protein sequence, read N- to C-terminus: Ubiquitin carboxyl-terminal hydrolase 5 (924 aa).

The region spanning L15 to S145 is the DUSP domain. The segment covering T64–K83 has biased composition (polar residues). Residues T64–R87 are disordered. The region spanning T317–K916 is the USP domain. Catalysis depends on C326, which acts as the Nucleophile. Positions R648–S667 are enriched in basic and acidic residues. Positions R648–S690 are disordered. Catalysis depends on H874, which acts as the Proton acceptor.

This sequence belongs to the peptidase C19 family.

It carries out the reaction Thiol-dependent hydrolysis of ester, thioester, amide, peptide and isopeptide bonds formed by the C-terminal Gly of ubiquitin (a 76-residue protein attached to proteins as an intracellular targeting signal).. Recognizes and hydrolyzes the peptide bond at the C-terminal Gly of ubiquitin. Involved in the processing of poly-ubiquitin precursors as well as that of ubiquitinated proteins. The chain is Ubiquitin carboxyl-terminal hydrolase 5 (UBP5) from Arabidopsis thaliana (Mouse-ear cress).